We begin with the raw amino-acid sequence, 1021 residues long: Immunoglobulin superfamily member 2 (1021 aa).

Positions 1 to 20 are cleaved as a signal peptide; that stretch reads MAGISYVASFFLLLTKLSIG. The Extracellular segment spans residues 21–954; sequence QREVTVQKGP…LPSRICSSAP (934 aa). 7 consecutive Ig-like C2-type domains span residues 22 to 139, 144 to 265, 279 to 389, 408 to 525, 541 to 651, 656 to 794, and 808 to 925; these read REVT…AKTN, PDTL…WMFI, PAVK…RTGS, PAAR…RDLS, LQVS…NSLY, PRAS…WHKL, and PTGS…KWIN. 2 cysteine pairs are disulfide-bonded: Cys43–Cys121 and Cys168–Cys249. A glycan (N-linked (GlcNAc...) asparagine) is linked at Asn44. Residues 253-255 carry the EWI motif motif; that stretch reads EWI. Cystine bridges form between Cys304/Cys377, Cys434/Cys511, Cys562/Cys640, Cys697/Cys778, and Cys834/Cys909. The N-linked (GlcNAc...) asparagine glycan is linked to Asn322. Residues 955–975 form a helical membrane-spanning segment; the sequence is LLYFLFICPFVLLLLLLISLL. Residues 976 to 1021 lie on the Cytoplasmic side of the membrane; it reads CLYWKARKLSTLRSNTRKEKALWVDLKEAGGVTTNRREDEEEDEGN.

Post-translationally, N-glycosylated. Expressed in lung, thymus and small intestine. Detected in cutaneous dendritic cells, activated T-cells, monocytes and granulocytes as well as with epithelial cells with dendritic morphology. Expressed in some leukemic cells, the CD4(+) CD56(+) blastic tumor cells, as well as in Langerhans cells from LCH (Langerhans cell histiocytosis) patients.

The protein localises to the membrane. Plays a role as inhibitor of T-cells proliferation induced by CD3. Inhibits expression of IL2RA on activated T-cells and secretion of IL2. Inhibits tyrosine kinases that are required for IL2 production and cellular proliferation. Inhibits phospholipase C-gamma-1/PLCG1 phosphorylation and subsequent CD3-induced changes in intracellular free calcium. Prevents nuclear translocation of nuclear factor of activated T-cell to the nucleus. Plays a role in the inhibition of T-cell proliferation via IL10 secretion by cutaneous dendritic cells. May be a marker of CD4(+) CD56(+) leukemic tumor cells. This chain is Immunoglobulin superfamily member 2 (CD101), found in Homo sapiens (Human).